The following is a 517-amino-acid chain: GMP synthase [glutamine-hydrolyzing] (517 aa).

Residues 9–199 (RILILDFGSQ…VLNVCGCEGL (191 aa)) form the Glutamine amidotransferase type-1 domain. Cys86 functions as the Nucleophile in the catalytic mechanism. Catalysis depends on residues His173 and Glu175. Residues 200–392 (WTSASIIEDA…LGLPYNMLYR (193 aa)) enclose the GMPS ATP-PPase domain. 227 to 233 (SGGVDSS) serves as a coordination point for ATP.

In terms of assembly, homodimer.

It catalyses the reaction XMP + L-glutamine + ATP + H2O = GMP + L-glutamate + AMP + diphosphate + 2 H(+). Its pathway is purine metabolism; GMP biosynthesis; GMP from XMP (L-Gln route): step 1/1. In terms of biological role, catalyzes the synthesis of GMP from XMP. In Aliivibrio fischeri (strain ATCC 700601 / ES114) (Vibrio fischeri), this protein is GMP synthase [glutamine-hydrolyzing].